The primary structure comprises 608 residues: Protein UL27 (608 aa).

The span at 1-13 shows a compositional bias: pro residues; it reads MNPVDQPPPPLPT. A disordered region spans residues 1–33; the sequence is MNPVDQPPPPLPTQQPEEQAKEDHDDGDERLFR. Over residues 18–33 the composition is skewed to basic and acidic residues; sequence EQAKEDHDDGDERLFR.

The protein belongs to the herpesviridae U4 family. In terms of assembly, interacts with host KAT5, PSME3 and EP400.

The protein resides in the host nucleus. It is found in the host nucleolus. Functionally, promotes a cell cycle arrest in G0/G1 by inducing the proteasomal degradation of host histone acetyltransferase KAT5/Tip60. The polypeptide is Protein UL27 (UL27) (Human cytomegalovirus (strain AD169) (HHV-5)).